Reading from the N-terminus, the 292-residue chain is UDP-N-acetylenolpyruvoylglucosamine reductase (292 aa).

An FAD-binding PCMH-type domain is found at 27 to 188 (KIGGPVRLFI…LRVGFRIIKG (162 aa)). Residue Arg166 is part of the active site. Ser217 acts as the Proton donor in catalysis. Glu288 is an active-site residue.

The protein belongs to the MurB family. FAD is required as a cofactor.

It is found in the cytoplasm. The catalysed reaction is UDP-N-acetyl-alpha-D-muramate + NADP(+) = UDP-N-acetyl-3-O-(1-carboxyvinyl)-alpha-D-glucosamine + NADPH + H(+). It functions in the pathway cell wall biogenesis; peptidoglycan biosynthesis. In terms of biological role, cell wall formation. The sequence is that of UDP-N-acetylenolpyruvoylglucosamine reductase from Thermosipho melanesiensis (strain DSM 12029 / CIP 104789 / BI429).